We begin with the raw amino-acid sequence, 227 residues long: ATP synthase F(0) complex subunit a (227 aa).

A run of 6 helical transmembrane segments spans residues 14–34 (FLGIPMILMALALPWLLIPTP), 73–93 (LASLMMFLLTLNMLGLMPYIF), 98–118 (QLSLNLGLAVPLWLATVLIGM), 137–157 (ALIPILIIMQTISLFIRPLAL), 179–199 (VFVLMPMMPVVAILTAVLLLL), and 203–223 (LEVAVAMIQAYVFILLLSLYL).

The protein belongs to the ATPase A chain family. Component of the ATP synthase complex composed at least of ATP5F1A/subunit alpha, ATP5F1B/subunit beta, ATP5MC1/subunit c (homooctomer), MT-ATP6/subunit a, MT-ATP8/subunit 8, ATP5ME/subunit e, ATP5MF/subunit f, ATP5MG/subunit g, ATP5MK/subunit k, ATP5MJ/subunit j, ATP5F1C/subunit gamma, ATP5F1D/subunit delta, ATP5F1E/subunit epsilon, ATP5PF/subunit F6, ATP5PB/subunit b, ATP5PD/subunit d, ATP5PO/subunit OSCP. ATP synthase complex consists of a soluble F(1) head domain (subunits alpha(3) and beta(3)) - the catalytic core - and a membrane F(0) domain - the membrane proton channel (subunits c, a, 8, e, f, g, k and j). These two domains are linked by a central stalk (subunits gamma, delta, and epsilon) rotating inside the F1 region and a stationary peripheral stalk (subunits F6, b, d, and OSCP). Interacts with DNAJC30; interaction is direct.

It is found in the mitochondrion inner membrane. The catalysed reaction is H(+)(in) = H(+)(out). Its function is as follows. Subunit a, of the mitochondrial membrane ATP synthase complex (F(1)F(0) ATP synthase or Complex V) that produces ATP from ADP in the presence of a proton gradient across the membrane which is generated by electron transport complexes of the respiratory chain. ATP synthase complex consist of a soluble F(1) head domain - the catalytic core - and a membrane F(1) domain - the membrane proton channel. These two domains are linked by a central stalk rotating inside the F(1) region and a stationary peripheral stalk. During catalysis, ATP synthesis in the catalytic domain of F(1) is coupled via a rotary mechanism of the central stalk subunits to proton translocation. With the subunit c (ATP5MC1), forms the proton-conducting channel in the F(0) domain, that contains two crucial half-channels (inlet and outlet) that facilitate proton movement from the mitochondrial intermembrane space (IMS) into the matrix. Protons are taken up via the inlet half-channel and released through the outlet half-channel, following a Grotthuss mechanism. This is ATP synthase F(0) complex subunit a from Gadus morhua (Atlantic cod).